The primary structure comprises 347 residues: UPF0284 protein SSO2213 (347 aa).

The protein belongs to the UPF0284 family.

The sequence is that of UPF0284 protein SSO2213 from Saccharolobus solfataricus (strain ATCC 35092 / DSM 1617 / JCM 11322 / P2) (Sulfolobus solfataricus).